A 485-amino-acid polypeptide reads, in one-letter code: Chitin synthase regulator 2 (485 aa).

Sel1-like repeat units lie at residues 164–202, 203–238, 239–275, 279–316, 317–353, 354–391, and 392–427; these read PDAQ…KHGH, PDAC…VGLH, PGAM…EHAT, PHAL…ELGY, APSA…QQDH, KDAC…ELGL, and AKAQ…EGGD. Residues 460–485 are disordered; sequence AANLAQRSGSGSGASGKDGKDGCLIM. Positions 476-485 are enriched in basic and acidic residues; the sequence is KDGKDGCLIM. Position 482 is a cysteine methyl ester (Cys-482). Cys-482 carries S-farnesyl cysteine lipidation. A propeptide spans 483–485 (removed in mature form); sequence LIM.

The protein belongs to the SKT5 family.

It localises to the cell membrane. Activator of the chitin synthase CHS3 which polymerizes chitin, a structural polymer of the fungal cell wall. Chitin produced by CHS3 is deacetylated to chitosan, which helps to maintain cell wall integrity, anchor melanin, and offers an advantage during infection, as chitosan is less readily detected by host immunosurveillance. The protein is Chitin synthase regulator 2 of Cryptococcus neoformans var. grubii serotype A (strain H99 / ATCC 208821 / CBS 10515 / FGSC 9487) (Filobasidiella neoformans var. grubii).